The sequence spans 270 residues: Formamidopyrimidine-DNA glycosylase (270 aa).

Proline 2 serves as the catalytic Schiff-base intermediate with DNA. The active-site Proton donor is the glutamate 3. Residue lysine 58 is the Proton donor; for beta-elimination activity of the active site. Residues histidine 91, arginine 110, and lysine 151 each contribute to the DNA site. The FPG-type zinc-finger motif lies at 236–270; that stretch reads FVYGRGGQPCKVCGTTLREIKLGQRASVYCPKCQR. The Proton donor; for delta-elimination activity role is filled by arginine 260.

Belongs to the FPG family. In terms of assembly, monomer. Requires Zn(2+) as cofactor.

It carries out the reaction Hydrolysis of DNA containing ring-opened 7-methylguanine residues, releasing 2,6-diamino-4-hydroxy-5-(N-methyl)formamidopyrimidine.. The catalysed reaction is 2'-deoxyribonucleotide-(2'-deoxyribose 5'-phosphate)-2'-deoxyribonucleotide-DNA = a 3'-end 2'-deoxyribonucleotide-(2,3-dehydro-2,3-deoxyribose 5'-phosphate)-DNA + a 5'-end 5'-phospho-2'-deoxyribonucleoside-DNA + H(+). Involved in base excision repair of DNA damaged by oxidation or by mutagenic agents. Acts as a DNA glycosylase that recognizes and removes damaged bases. Has a preference for oxidized purines, such as 7,8-dihydro-8-oxoguanine (8-oxoG). Has AP (apurinic/apyrimidinic) lyase activity and introduces nicks in the DNA strand. Cleaves the DNA backbone by beta-delta elimination to generate a single-strand break at the site of the removed base with both 3'- and 5'-phosphates. The sequence is that of Formamidopyrimidine-DNA glycosylase from Pseudomonas savastanoi pv. phaseolicola (strain 1448A / Race 6) (Pseudomonas syringae pv. phaseolicola (strain 1448A / Race 6)).